Reading from the N-terminus, the 75-residue chain is Acyl carrier protein (75 aa).

The Carrier domain occupies 1 to 74 (MLDKVKEIIV…DVINYIEANK (74 aa)). The residue at position 34 (Ser-34) is an O-(pantetheine 4'-phosphoryl)serine.

It belongs to the acyl carrier protein (ACP) family. 4'-phosphopantetheine is transferred from CoA to a specific serine of apo-ACP by AcpS. This modification is essential for activity because fatty acids are bound in thioester linkage to the sulfhydryl of the prosthetic group.

It localises to the cytoplasm. It participates in lipid metabolism; fatty acid biosynthesis. Carrier of the growing fatty acid chain in fatty acid biosynthesis. In Fusobacterium nucleatum subsp. nucleatum (strain ATCC 25586 / DSM 15643 / BCRC 10681 / CIP 101130 / JCM 8532 / KCTC 2640 / LMG 13131 / VPI 4355), this protein is Acyl carrier protein.